Here is a 156-residue protein sequence, read N- to C-terminus: Transcription antitermination protein NusB (156 aa).

The protein belongs to the NusB family.

In terms of biological role, involved in transcription antitermination. Required for transcription of ribosomal RNA (rRNA) genes. Binds specifically to the boxA antiterminator sequence of the ribosomal RNA (rrn) operons. This chain is Transcription antitermination protein NusB, found in Rickettsia africae (strain ESF-5).